The following is an 89-amino-acid chain: Small ribosomal subunit protein uS17 (89 aa).

Belongs to the universal ribosomal protein uS17 family. In terms of assembly, part of the 30S ribosomal subunit.

In terms of biological role, one of the primary rRNA binding proteins, it binds specifically to the 5'-end of 16S ribosomal RNA. This Polaromonas naphthalenivorans (strain CJ2) protein is Small ribosomal subunit protein uS17.